A 149-amino-acid polypeptide reads, in one-letter code: Endoribonuclease YbeY (149 aa).

Residues His-101, His-105, and His-111 each coordinate Zn(2+).

This sequence belongs to the endoribonuclease YbeY family. It depends on Zn(2+) as a cofactor.

Its subcellular location is the cytoplasm. Its function is as follows. Single strand-specific metallo-endoribonuclease involved in late-stage 70S ribosome quality control and in maturation of the 3' terminus of the 16S rRNA. The chain is Endoribonuclease YbeY from Thermotoga neapolitana (strain ATCC 49049 / DSM 4359 / NBRC 107923 / NS-E).